The sequence spans 255 residues: Protein 2b (255 aa).

This sequence belongs to the tobravirus protein 2b family.

It is found in the virion. In terms of biological role, may function by interacting with a small, flexible domain located at the C-terminus of the CP, forming a bridge between the virus particle and the internal surface of the vector nematode feeding apparatus. This is Protein 2b from Tobacco rattle virus (strain TCM).